The following is a 401-amino-acid chain: Prion-like-(Q/N-rich) domain-bearing protein 8 (401 aa).

A compositionally biased stretch (low complexity) spans 70–84 (QRSQNQNQNSNNPQQ). Disordered regions lie at residues 70 to 109 (QRSQ…SNQQ) and 122 to 303 (YKNS…SNTQ). 2 stretches are compositionally biased toward polar residues: residues 89 to 109 (TSQS…SNQQ) and 125 to 134 (SEVTTSTPTP). Composition is skewed to low complexity over residues 135-181 (NGFN…QNLG), 188-239 (NNQN…NQNG), and 247-289 (FSNG…QNPN).

As to expression, expressed in the pharyngeal glands.

In Caenorhabditis elegans, this protein is Prion-like-(Q/N-rich) domain-bearing protein 8 (pqn-8).